The sequence spans 436 residues: Citrate synthase (436 aa).

Residues His-311 and Asp-370 contribute to the active site.

Belongs to the citrate synthase family. Homohexamer.

It carries out the reaction oxaloacetate + acetyl-CoA + H2O = citrate + CoA + H(+). It participates in carbohydrate metabolism; tricarboxylic acid cycle; isocitrate from oxaloacetate: step 1/2. Allosterically inhibited by NADH. The sequence is that of Citrate synthase (gltA) from Rickettsia prowazekii (strain Madrid E).